The following is a 415-amino-acid chain: Meiotic driver wtf36 (415 aa).

Disordered regions lie at residues 1–49 (MKNK…DLNN) and 67–99 (TTPP…SGTA). Basic and acidic residues predominate over residues 11-29 (SMDEMSAKNDNEIDLEKGP). Helical transmembrane passes span 105–125 (FLIK…PAVC), 142–162 (WTLF…LTYF), 169–189 (AVKV…IFLA), 205–225 (VTAI…AQCV), 240–260 (VVII…RSKF), 274–294 (CSIS…FWTL), and 298–318 (FSGL…TKGL).

Belongs to the WTF family. As to quaternary structure, homomer. Forms protein aggregates. The two isoforms can interact with each other and with themselves. High sequence similarity is required for their interaction.

Its subcellular location is the spore membrane. It is found in the vacuole membrane. It localises to the ascus epiplasm. The protein resides in the cytoplasm. The protein localises to the endoplasmic reticulum membrane. Promotes unequal transmission of alleles from the parental zygote to progeny spores by acting as poison/antidote system where the poison and antidote proteins are produced from the same locus; the poison component is trans-acting and targets all spores within an ascus whereas the antidote component is spore-specific, leading to poisoning of all progeny that do not inherit the allele. Its function is as follows. Localizes isoform 2 to the vacuole thereby facilitating its degradation. In terms of biological role, forms toxic aggregates that disrupt spore maturation. The protein is Meiotic driver wtf36 of Schizosaccharomyces pombe (Fission yeast).